The following is a 409-amino-acid chain: LL-diaminopimelate aminotransferase (409 aa).

Substrate contacts are provided by Y15 and G42. Pyridoxal 5'-phosphate-binding positions include Y72, A108 to K109, Y132, N186, Y217, and S245 to S247. Substrate is bound by residues K109, Y132, and N186. K248 is subject to N6-(pyridoxal phosphate)lysine. R256 and N291 together coordinate pyridoxal 5'-phosphate. Residues N291 and R385 each coordinate substrate.

The protein belongs to the class-I pyridoxal-phosphate-dependent aminotransferase family. LL-diaminopimelate aminotransferase subfamily. As to quaternary structure, homodimer. It depends on pyridoxal 5'-phosphate as a cofactor.

It catalyses the reaction (2S,6S)-2,6-diaminopimelate + 2-oxoglutarate = (S)-2,3,4,5-tetrahydrodipicolinate + L-glutamate + H2O + H(+). It functions in the pathway amino-acid biosynthesis; L-lysine biosynthesis via DAP pathway; LL-2,6-diaminopimelate from (S)-tetrahydrodipicolinate (aminotransferase route): step 1/1. Involved in the synthesis of meso-diaminopimelate (m-DAP or DL-DAP), required for both lysine and peptidoglycan biosynthesis. Catalyzes the direct conversion of tetrahydrodipicolinate to LL-diaminopimelate. The protein is LL-diaminopimelate aminotransferase of Desulfosudis oleivorans (strain DSM 6200 / JCM 39069 / Hxd3) (Desulfococcus oleovorans).